The chain runs to 86 residues: CLAVATA3/ESR (CLE)-related protein 7 (86 aa).

A signal peptide spans 1–22 (MASKALLLFVMLTFLLVIEMEG). The N-linked (GlcNAc...) asparagine glycan is linked to Asn-46. The disordered stretch occupies residues 63 to 86 (VDRFSPGGPDPQHHSYPLSSKPRI). Residues Pro-68 and Pro-71 each carry the hydroxyproline modification. A glycan (O-linked (Ara...) hydroxyproline) is linked at Pro-71.

It belongs to the CLV3/ESR signal peptide family. The O-glycosylation (arabinosylation) of the hydroxyproline Pro-71 enhances binding affinity of the CLE7p peptide for its receptor. As to expression, expressed in roots and seedlings.

Its subcellular location is the secreted. It is found in the extracellular space. Extracellular signal peptide that regulates cell fate. This Arabidopsis thaliana (Mouse-ear cress) protein is CLAVATA3/ESR (CLE)-related protein 7.